The following is an 85-amino-acid chain: Small ribosomal subunit protein bS16 (85 aa).

It belongs to the bacterial ribosomal protein bS16 family.

The sequence is that of Small ribosomal subunit protein bS16 from Pseudomonas syringae pv. tomato (strain ATCC BAA-871 / DC3000).